The sequence spans 183 residues: MKVLAVTGYKPFELGIFKHDDKALFYIKKALENRMIALLEEGLEWVLISGQLGTELWAAEVAFSLQEEFPDLKVAVITPFLEQEKKWSEKNQEQYEAVLAASDFTESLTHRPYESPVQFKQKNRFFIEKADGLLILYDEEIEGSPVYMLNEAKKAQEKRDFPIYTITMDDLRVTVEECSFYEE.

It belongs to the UPF0398 family.

The sequence is that of UPF0398 protein BLi02355/BL05236 from Bacillus licheniformis (strain ATCC 14580 / DSM 13 / JCM 2505 / CCUG 7422 / NBRC 12200 / NCIMB 9375 / NCTC 10341 / NRRL NRS-1264 / Gibson 46).